We begin with the raw amino-acid sequence, 1001 residues long: Ribonuclease E/G-like protein, chloroplastic (1001 aa).

Residues 1–48 (MDVTEVPWRRLPQFSVSSRASWLVSSGFPLSSYMFSHVERGKTFRLTL) constitute a chloroplast transit peptide. In terms of domain architecture, CBM20 spans 76–185 (SRLKGLCEVV…KIIIRDSWMS (110 aa)). A Mg(2+)-binding site is contributed by Asp755. Residues 769 to 789 (QEKAILEVNLAAARQIAREIR) adopt a coiled-coil conformation. Asp800 is a Mg(2+) binding site. Zn(2+)-binding residues include Cys858 and Cys861.

The protein belongs to the RNase E/G family. As to quaternary structure, part of a chloroplastic degradosome-like complex. Interacts with RHON1. A homotetramer formed by a dimer of dimers. Mg(2+) serves as cofactor. Requires Zn(2+) as cofactor. In terms of tissue distribution, expressed in cotyledons, rosette and cauline leaves.

It localises to the plastid. It is found in the chloroplast stroma. Its function is as follows. Involved in intercistronic processing of primary transcripts from chloroplast operons. The endonucleolytic activity of the enzyme depends on the number of phosphates at the 5' end, is inhibited by structured RNA, and preferentially cleaves A/U-rich sequences. This chain is Ribonuclease E/G-like protein, chloroplastic (RNE), found in Arabidopsis thaliana (Mouse-ear cress).